A 586-amino-acid polypeptide reads, in one-letter code: MNVYAIFADHVREAVAALAGELPEAGALDLSRIVVEPPRDAAHGDLATNAAMVLAKDLKMKPRDLAEKIAARLAQVPNVAKVDVAGPGFINLTLDAGYWPGVLAALLRAGTDFGRSDLGGGEAVNVEYVSANPTGPMHVGHCRGAVFGDALASLLAFAGFKVTREYYINDAGAQVDVLARSAYLRYREAATGETVEIPDGLYPGDYLVPVGKTLAEVHGSEYLESPESEWLPIFRTFAIGAMMEMIRDDLQALGISFDVFFSERSLTAAGIDRVGLTIEQLRRTGEVYEGRLPPPKGAPIEDWEDREQSLFRSTAHGDDVDRPLVKSDGSYTYFAGDIAYHKDKFDRGFRRMIDVWGADHGGYVKRMQAAVKAVTAGQATLDVELCQLVRLLRNGEQVRMSKRAGSFVTLREVVDEVGRDAVRFMMLFRKNDATLDFDLAKVIEQSRENPVFYVQYAHARAQSILRNAKEQHADLPESGAIYAHAPLDRLTDEGELGLVKRLAGWPRLVEQAAHAREPHRVAFYLHEVASEFHGQWNRGKDLPHLRFIIENDRELTMARLALVHGVAAVLASGLGLLGVEAVDEMK.

The short motif at 131–141 (ANPTGPMHVGH) is the 'HIGH' region element.

The protein belongs to the class-I aminoacyl-tRNA synthetase family. Monomer.

It is found in the cytoplasm. It carries out the reaction tRNA(Arg) + L-arginine + ATP = L-arginyl-tRNA(Arg) + AMP + diphosphate. In Azorhizobium caulinodans (strain ATCC 43989 / DSM 5975 / JCM 20966 / LMG 6465 / NBRC 14845 / NCIMB 13405 / ORS 571), this protein is Arginine--tRNA ligase.